The following is a 172-amino-acid chain: MRAVFPGRFQPFHLGHLAVIEWLLSKYDELIIVVGSGKDSHTIYNPFTAGERILMIKKGLKEFNVDFTRVIFFPIMDSFTSGLWIRNLELYSPKFDVVVSGNPLVISDAREAGYIVDLPPMFNREMYNATKIRKLMLENNESWSELVPKSVYSFIKEIKGDERLRDIARNDY.

The protein belongs to the archaeal NMN adenylyltransferase family.

It is found in the cytoplasm. The catalysed reaction is beta-nicotinamide D-ribonucleotide + ATP + H(+) = diphosphate + NAD(+). The protein operates within cofactor biosynthesis; NAD(+) biosynthesis; NAD(+) from nicotinamide D-ribonucleotide: step 1/1. This is Nicotinamide-nucleotide adenylyltransferase from Sulfurisphaera tokodaii (strain DSM 16993 / JCM 10545 / NBRC 100140 / 7) (Sulfolobus tokodaii).